A 158-amino-acid chain; its full sequence is Phosphopantetheine adenylyltransferase (158 aa).

Residue threonine 10 coordinates substrate. Residues 10–11 (TF) and histidine 18 each bind ATP. Substrate contacts are provided by lysine 42, leucine 74, and arginine 88. ATP contacts are provided by residues 89–91 (GLR), glutamate 99, and 124–130 (NSFISST).

Belongs to the bacterial CoaD family. In terms of assembly, homohexamer. The cofactor is Mg(2+).

It localises to the cytoplasm. The catalysed reaction is (R)-4'-phosphopantetheine + ATP + H(+) = 3'-dephospho-CoA + diphosphate. It participates in cofactor biosynthesis; coenzyme A biosynthesis; CoA from (R)-pantothenate: step 4/5. Reversibly transfers an adenylyl group from ATP to 4'-phosphopantetheine, yielding dephospho-CoA (dPCoA) and pyrophosphate. The polypeptide is Phosphopantetheine adenylyltransferase (Shewanella sediminis (strain HAW-EB3)).